Reading from the N-terminus, the 102-residue chain is uncharacterized protein (102 aa).

Residues Cys10, Cys16, and Cys55 each coordinate [3Fe-4S] cluster. The tract at residues 66–102 (DAGDDERASADPARSPAEAERHAAKDQRIPGGHDGTV) is disordered. Residues 82 to 93 (AEAERHAAKDQR) show a composition bias toward basic and acidic residues.

It depends on [3Fe-4S] cluster as a cofactor.

Its function is as follows. Electron transport protein for the cytochrome systems. This is an uncharacterized protein from Sinorhizobium fredii (strain NBRC 101917 / NGR234).